Consider the following 125-residue polypeptide: 14 kDa phosphohistidine phosphatase (125 aa).

Ala-2 is modified (N-acetylalanine). Lys-21 contacts substrate. Catalysis depends on His-53, which acts as the Proton acceptor. 94–96 (SMA) is a substrate binding site.

Belongs to the janus family. Monomer. In terms of tissue distribution, expressed abundantly in heart and skeletal muscle.

It localises to the cytoplasm. It carries out the reaction N(pros)-phospho-L-histidyl-[protein] + H2O = L-histidyl-[protein] + phosphate. The enzyme catalyses N(tele)-phospho-L-histidyl-[protein] + H2O = L-histidyl-[protein] + phosphate. In terms of biological role, exhibits phosphohistidine phosphatase activity. The chain is 14 kDa phosphohistidine phosphatase (PHPT1) from Homo sapiens (Human).